A 302-amino-acid polypeptide reads, in one-letter code: Sulfate adenylyltransferase subunit 2 (302 aa).

The protein belongs to the PAPS reductase family. CysD subfamily. In terms of assembly, heterodimer composed of CysD, the smaller subunit, and CysN.

The catalysed reaction is sulfate + ATP + H(+) = adenosine 5'-phosphosulfate + diphosphate. It participates in sulfur metabolism; hydrogen sulfide biosynthesis; sulfite from sulfate: step 1/3. In terms of biological role, with CysN forms the ATP sulfurylase (ATPS) that catalyzes the adenylation of sulfate producing adenosine 5'-phosphosulfate (APS) and diphosphate, the first enzymatic step in sulfur assimilation pathway. APS synthesis involves the formation of a high-energy phosphoric-sulfuric acid anhydride bond driven by GTP hydrolysis by CysN coupled to ATP hydrolysis by CysD. The chain is Sulfate adenylyltransferase subunit 2 from Parabacteroides distasonis (strain ATCC 8503 / DSM 20701 / CIP 104284 / JCM 5825 / NCTC 11152).